The following is a 1288-amino-acid chain: 5-oxoprolinase (1288 aa).

Phosphothreonine is present on Thr151. Residues 1249-1269 (GGGGYGDPEDPAPLPGSPLQP) form a disordered region. Phosphoserine is present on Ser1265.

It belongs to the oxoprolinase family. Homodimer. In terms of tissue distribution, expressed in coronary artery and kidney.

Its subcellular location is the cytoplasm. The protein localises to the cytosol. The catalysed reaction is 5-oxo-L-proline + ATP + 2 H2O = L-glutamate + ADP + phosphate + H(+). Functionally, catalyzes the cleavage of 5-oxo-L-proline to form L-glutamate coupled to the hydrolysis of ATP to ADP and inorganic phosphate. The sequence is that of 5-oxoprolinase (OPLAH) from Bos taurus (Bovine).